Consider the following 176-residue polypeptide: Lipoprotein signal peptidase (176 aa).

The next 4 membrane-spanning stretches (helical) occupy residues 10–30, 48–68, 78–98, and 102–122; these read LFQF…AIVL, VPVL…AFSF, YFFT…LLRM, and MVVL…NLID. Residues Asp-131 and Asp-149 contribute to the active site. A helical transmembrane segment spans residues 141–161; sequence HFPAFNIADSAITLGTILLLI.

The protein belongs to the peptidase A8 family.

The protein resides in the cell inner membrane. It catalyses the reaction Release of signal peptides from bacterial membrane prolipoproteins. Hydrolyzes -Xaa-Yaa-Zaa-|-(S,diacylglyceryl)Cys-, in which Xaa is hydrophobic (preferably Leu), and Yaa (Ala or Ser) and Zaa (Gly or Ala) have small, neutral side chains.. It participates in protein modification; lipoprotein biosynthesis (signal peptide cleavage). Functionally, this protein specifically catalyzes the removal of signal peptides from prolipoproteins. In Acinetobacter baumannii (strain SDF), this protein is Lipoprotein signal peptidase.